The following is a 332-amino-acid chain: Mitoferrin-1 (332 aa).

Solcar repeat units lie at residues 31–119 (ASLG…IKRS), 129–213 (NSHI…MQEH), and 220–314 (YRPE…FKYF). A run of 6 helical transmembrane segments spans residues 33-52 (LGTH…TVMY), 94-113 (GLNI…FACY), 131-150 (HIAN…AVMN), 188-207 (SYST…FITY), 222-241 (PETH…AVTT), and 289-308 (GIQA…WSVY).

This sequence belongs to the mitochondrial carrier (TC 2.A.29) family. In terms of tissue distribution, highly expressed in hematopoietic organs, Expressed in the intermediate cell mass (ICM), a tissue equivalent to the mammalian extraembryonic yolk-sac blood islands. Colocalizes with gata1.

It is found in the mitochondrion inner membrane. The enzyme catalyses Fe(2+)(in) = Fe(2+)(out). Mitochondrial iron transporter that specifically mediates iron uptake in developing erythroid cells, thereby playing an essential role in heme biosynthesis. The chain is Mitoferrin-1 (slc25a37) from Danio rerio (Zebrafish).